A 394-amino-acid chain; its full sequence is MVVFSKTAALVLGLSTAVSAAPAPTRKGFTINQIARPANKTRTVNLPGLYARSLAKFGGTVPQSVKEAASKGSAVTTPQNNDEEYLTPVTVGKSTLHLDFDTGSADLWVFSDELPSSEQTGHDLYTPSSSATKLSGYSWDISYGDGSSASGDVYRDTVTVGGVTTNKQAVEAASKISSEFVQDTANDGLLGLAFSSINTVQPKAQTTFFDTVKSQLDSPLFAVQLKHDAPGVYDFGYIDDSKYTGSITYTDADSSQGYWGFSTDGYSIGDGSSSSSGFSAIADTGTTLILLDDEIVSAYYEQVSGAQESYEAGGYVFSCSTDLPDFTVVIGDYKAVVPGKYINYAPVSTGSSTCYGGIQSNSGLGLSILGDVFLKSQYVVFNSEGPKLGFAAQA.

The signal sequence occupies residues 1–20 (MVVFSKTAALVLGLSTAVSA). Residues 21–69 (APAPTRKGFTINQIARPANKTRTVNLPGLYARSLAKFGGTVPQSVKEAA) constitute a propeptide, activation peptide. Residues 85 to 391 (YLTPVTVGKS…NSEGPKLGFA (307 aa)) form the Peptidase A1 domain. The active site involves D101. O-linked (Man...) serine glycosylation is found at S129 and S304. C319 and C354 are joined by a disulfide.

It belongs to the peptidase A1 family. Monomer.

Its subcellular location is the secreted. It carries out the reaction Hydrolysis of proteins with broad specificity. Generally favors hydrophobic residues in P1 and P1', but also accepts Lys in P1, which leads to activation of trypsinogen. Does not clot milk.. Functionally, secreted aspartic endopeptidase that allows assimilation of proteinaceous substrates. The scissile peptide bond is attacked by a nucleophilic water molecule activated by two aspartic residues in the active site. Shows a broad primary substrate specificity. Favors hydrophobic residues at the P1 and P1' positions, but also accepts a lysine residue in the P1 position, leading to the activation of trypsinogen and chymotrypsinogen A. The chain is Aspergillopepsin-1 (pepA) from Aspergillus phoenicis (Aspergillus saitoi).